Consider the following 128-residue polypeptide: uncharacterized protein (128 aa).

This is an uncharacterized protein from Frog virus 3 (isolate Goorha) (FV-3).